The sequence spans 428 residues: MLDIRLFRNEPVTVKSKIELRGDDPKVVDEILELDEQRRKLISATEEMKARRNKVSEEIALKKRNKENADDVIAEMRTLGDDIKEKDSQLNEIDNKMTGILCRIPNLISDDVPQGESDEDNVEVKKWGTPREFSFEPKAHWDIVEELKMADFDRAAKVSGARFVYLTNEGAQLERALMNYMITKHTTQHGYTEMMVPQLVNADTMYGTGQLPKFEEDLFKVEKEGLYTIPTAEVPLTNFYRNEIIQPGVLPEKFTGQSACFRSEAGSAGRDTRGLIRLHQFDKVEMVRFEQPEDSWNALEEMTTNAEAILEELGLPYRRVILCTGDIGFSASKTYDLEVWLPSYNDYKEISSCSNCTDFQARRANIRFKRDKAAKPELAHTLNGSGLAVGRTFAAIVENYQNEDGTVTIPEALVPFMGGKTQISKPVK.

L-serine is bound at residue 231-233 (TAE). 262-264 (RSE) contacts ATP. Glutamate 285 provides a ligand contact to L-serine. 349–352 (EISS) serves as a coordination point for ATP. An L-serine-binding site is contributed by serine 385.

Belongs to the class-II aminoacyl-tRNA synthetase family. Type-1 seryl-tRNA synthetase subfamily. Homodimer. The tRNA molecule binds across the dimer.

The protein localises to the cytoplasm. The enzyme catalyses tRNA(Ser) + L-serine + ATP = L-seryl-tRNA(Ser) + AMP + diphosphate + H(+). It catalyses the reaction tRNA(Sec) + L-serine + ATP = L-seryl-tRNA(Sec) + AMP + diphosphate + H(+). The protein operates within aminoacyl-tRNA biosynthesis; selenocysteinyl-tRNA(Sec) biosynthesis; L-seryl-tRNA(Sec) from L-serine and tRNA(Sec): step 1/1. Its function is as follows. Catalyzes the attachment of serine to tRNA(Ser). Is also able to aminoacylate tRNA(Sec) with serine, to form the misacylated tRNA L-seryl-tRNA(Sec), which will be further converted into selenocysteinyl-tRNA(Sec). This chain is Serine--tRNA ligase, found in Staphylococcus aureus (strain MW2).